The sequence spans 389 residues: Lipid-A-disaccharide synthase (389 aa).

Belongs to the LpxB family.

It catalyses the reaction a lipid X + a UDP-2-N,3-O-bis[(3R)-3-hydroxyacyl]-alpha-D-glucosamine = a lipid A disaccharide + UDP + H(+). It functions in the pathway bacterial outer membrane biogenesis; LPS lipid A biosynthesis. Functionally, condensation of UDP-2,3-diacylglucosamine and 2,3-diacylglucosamine-1-phosphate to form lipid A disaccharide, a precursor of lipid A, a phosphorylated glycolipid that anchors the lipopolysaccharide to the outer membrane of the cell. This Burkholderia multivorans (strain ATCC 17616 / 249) protein is Lipid-A-disaccharide synthase.